The chain runs to 414 residues: Serine hydroxymethyltransferase (414 aa).

(6S)-5,6,7,8-tetrahydrofolate contacts are provided by residues Leu-117 and Gly-121–Leu-123. N6-(pyridoxal phosphate)lysine is present on Lys-226.

It belongs to the SHMT family. Homodimer. Requires pyridoxal 5'-phosphate as cofactor.

The protein localises to the cytoplasm. The catalysed reaction is (6R)-5,10-methylene-5,6,7,8-tetrahydrofolate + glycine + H2O = (6S)-5,6,7,8-tetrahydrofolate + L-serine. The protein operates within one-carbon metabolism; tetrahydrofolate interconversion. It participates in amino-acid biosynthesis; glycine biosynthesis; glycine from L-serine: step 1/1. Catalyzes the reversible interconversion of serine and glycine with tetrahydrofolate (THF) serving as the one-carbon carrier. This reaction serves as the major source of one-carbon groups required for the biosynthesis of purines, thymidylate, methionine, and other important biomolecules. Also exhibits THF-independent aldolase activity toward beta-hydroxyamino acids, producing glycine and aldehydes, via a retro-aldol mechanism. The chain is Serine hydroxymethyltransferase from Dictyoglomus turgidum (strain DSM 6724 / Z-1310).